Reading from the N-terminus, the 587-residue chain is RuBisCO large subunit-binding protein subunit alpha, chloroplastic (587 aa).

Positions 1-25 (MASTNALSSTSILRSPTNQAQTSLS) are enriched in polar residues. The disordered stretch occupies residues 1-33 (MASTNALSSTSILRSPTNQAQTSLSKKVKQHGR). The N-terminal 47 residues, 1 to 47 (MASTNALSSTSILRSPTNQAQTSLSKKVKQHGRVNFRQKPNRFVVKA), are a transit peptide targeting the chloroplast.

It belongs to the chaperonin (HSP60) family. In terms of assembly, oligomer of probably six alpha and six beta subunits.

The protein localises to the plastid. Its subcellular location is the chloroplast. In terms of biological role, this protein binds RuBisCO small and large subunits and is implicated in the assembly of the enzyme oligomer. The chain is RuBisCO large subunit-binding protein subunit alpha, chloroplastic from Pisum sativum (Garden pea).